The chain runs to 739 residues: Alcohol dehydrogenase (quinone), dehydrogenase subunit (739 aa).

An N-terminal signal peptide occupies residues 1 to 35 (MISAVFGKRRSLSRTLTAGTICAALISGYATMASA). Pyrroloquinoline quinone is bound at residue E97. A disulfide bridge connects residues C143 and C144. R149 serves as a coordination point for pyrroloquinoline quinone. E217 provides a ligand contact to Ca(2+). T279 contacts pyrroloquinoline quinone. Ca(2+) is bound by residues N299 and D344. Residue D344 is the Proton acceptor of the active site. Pyrroloquinoline quinone is bound by residues K371 and I585. The 105-residue stretch at 635–739 (FDSKRTDNGY…NADGIPEQLP (105 aa)) folds into the Cytochrome c domain. Residues C651, C654, H655, and M694 each contribute to the heme c site.

The protein belongs to the bacterial PQQ dehydrogenase family. In terms of assembly, the alcohol dehydrogenase multicomponent enzyme system is composed of a dehydrogenase subunit I (AdhA) and a cytochrome c subunit II (AdhB). Requires pyrroloquinoline quinone as cofactor. It depends on Ca(2+) as a cofactor. Heme c serves as cofactor.

The protein localises to the cell membrane. The catalysed reaction is ethanol + a ubiquinone = a ubiquinol + acetaldehyde. In terms of biological role, dehydrogenase component of the alcohol dehydrogenase multicomponent enzyme system which is involved in the production of acetic acid and in the ethanol oxidase respiratory chain. Quinohemoprotein alcohol dehydrogenase (ADH) catalyzes the oxidation of ethanol to acetaldehyde by transferring electrons to the ubiquinone embedded in the membrane phospholipids. The electrons transfer from ethanol to membranous ubiquinone occurs from pyrroloquinoline quinone (PQQ) to one heme c in subunit I (AdhA), and finally to two heme c in subunit II (AdhB). Besides ubiquinone reduction, ADH also has a ubiquinol (QH2) oxidation reaction which mediates electron transfer from ubiquinol to the non-energy generating bypass oxidase system. The electrons transfer occurs from ubiquinol (QH2) to the additional heme c within subunit II (AdhB). In Komagataeibacter europaeus (Gluconacetobacter europaeus), this protein is Alcohol dehydrogenase (quinone), dehydrogenase subunit.